Here is a 1270-residue protein sequence, read N- to C-terminus: Microtubule-associated tumor suppressor 1 (1270 aa).

The span at 1-14 (MTDDNSDDKIEDEL) shows a compositional bias: acidic residues. Disordered regions lie at residues 1-50 (MTDD…NSAN) and 184-236 (FHTA…VTPS). Over residues 38 to 50 (NSSASSVNWNSAN) the composition is skewed to low complexity. Residue Thr-186 is modified to Phosphothreonine. A compositionally biased stretch (low complexity) spans 197–211 (SGSTSSLSYSTWTSS). A compositionally biased stretch (basic and acidic residues) spans 212-228 (HSDKTHARETTYDRESF). Residues Ser-381, Ser-399, and Ser-443 each carry the phosphoserine modification. Disordered stretches follow at residues 524 to 560 (DAAL…PRSD) and 592 to 622 (THSK…SSSN). A compositionally biased stretch (polar residues) spans 533–556 (RPQQTSASSPSSVNSRQQTVLSRT). Ser-629 carries the phosphoserine modification. Composition is skewed to polar residues over residues 701-710 (SKTTTTSGRN), 759-776 (VSSS…SSWV), and 797-815 (TGST…TYSN). The tract at residues 701–815 (SKTTTTSGRN…THSELSTYSN (115 aa)) is disordered. Residues 940–1231 (IQHLLSEREE…RLSMENEELL (292 aa)) adopt a coiled-coil conformation. Phosphoserine is present on residues Ser-1203, Ser-1224, Ser-1245, Ser-1255, Ser-1259, Ser-1261, Ser-1264, and Ser-1268. The tract at residues 1237-1270 (GDLCSPKRSPTSSAIPLQSPRNSGSFPSPSISPR) is disordered. Over residues 1244–1270 (RSPTSSAIPLQSPRNSGSFPSPSISPR) the composition is skewed to polar residues.

Belongs to the MTUS1 family. In terms of assembly, homodimer. Interacts with AGTR2. Interacts with PTPN6. Isoform 1 associates with microtubules. As to expression, ubiquitously expressed (at protein level). Highly expressed in brain. Down-regulated in ovarian carcinoma, pancreas carcinoma, colon carcinoma and head and neck squamous cell carcinoma (HNSCC). Isoform 1 is the major isoform in most peripheral tissues. Isoform 2 is abundant in most peripheral tissues. Isoform 3 is the major isoform in brain, female reproductive tissues, thyroid and heart. Within brain it is highly expressed in corpus callosum and pons. Isoform 6 is brain-specific, it is the major isoform in cerebellum and fetal brain.

It is found in the mitochondrion. The protein resides in the golgi apparatus. The protein localises to the cell membrane. It localises to the nucleus. Its subcellular location is the cytoplasm. It is found in the cytoskeleton. The protein resides in the microtubule organizing center. The protein localises to the centrosome. It localises to the spindle. Its function is as follows. Cooperates with AGTR2 to inhibit ERK2 activation and cell proliferation. May be required for AGTR2 cell surface expression. Together with PTPN6, induces UBE2V2 expression upon angiotensin-II stimulation. Isoform 1 inhibits breast cancer cell proliferation, delays the progression of mitosis by prolonging metaphase and reduces tumor growth. The chain is Microtubule-associated tumor suppressor 1 (MTUS1) from Homo sapiens (Human).